The chain runs to 335 residues: Ketol-acid reductoisomerase (NADP(+)) 2 (335 aa).

A KARI N-terminal Rossmann domain is found at 1 to 180; the sequence is MKTYYEQDAN…GCTRAGVIET (180 aa). Residues 24 to 27, Arg-47, Ser-51, and 81 to 84 each bind NADP(+); these read YGSQ and DEQQ. Residue His-106 is part of the active site. Gly-132 is an NADP(+) binding site. The 146-residue stretch at 181–326 folds into the KARI C-terminal knotted domain; that stretch reads TFQEETETDL…EELREMMSWI (146 aa). Positions 189, 193, 225, and 229 each coordinate Mg(2+). Substrate is bound at residue Ser-250.

The protein belongs to the ketol-acid reductoisomerase family. The cofactor is Mg(2+).

It catalyses the reaction (2R)-2,3-dihydroxy-3-methylbutanoate + NADP(+) = (2S)-2-acetolactate + NADPH + H(+). It carries out the reaction (2R,3R)-2,3-dihydroxy-3-methylpentanoate + NADP(+) = (S)-2-ethyl-2-hydroxy-3-oxobutanoate + NADPH + H(+). Its pathway is amino-acid biosynthesis; L-isoleucine biosynthesis; L-isoleucine from 2-oxobutanoate: step 2/4. It participates in amino-acid biosynthesis; L-valine biosynthesis; L-valine from pyruvate: step 2/4. Functionally, involved in the biosynthesis of branched-chain amino acids (BCAA). Catalyzes an alkyl-migration followed by a ketol-acid reduction of (S)-2-acetolactate (S2AL) to yield (R)-2,3-dihydroxy-isovalerate. In the isomerase reaction, S2AL is rearranged via a Mg-dependent methyl migration to produce 3-hydroxy-3-methyl-2-ketobutyrate (HMKB). In the reductase reaction, this 2-ketoacid undergoes a metal-dependent reduction by NADPH to yield (R)-2,3-dihydroxy-isovalerate. This is Ketol-acid reductoisomerase (NADP(+)) 2 from Bacillus anthracis.